Reading from the N-terminus, the 186-residue chain is Dynactin subunit 3 (186 aa).

Position 2 is an N-acetylalanine (Ala-2). Residues 135–157 (QQQDQCVEITEESKALLEEYNKT) adopt a coiled-coil conformation.

This sequence belongs to the dynactin subunit 3 family. In terms of assembly, subunit of dynactin, a multiprotein complex part of a tripartite complex with dynein and a adapter, such as BICDL1, BICD2 or HOOK3. The dynactin complex is built around ACTR1A/ACTB filament and consists of an actin-related filament composed of a shoulder domain, a pointed end and a barbed end. Its length is defined by its flexible shoulder domain. The soulder is composed of 2 DCTN1 subunits, 4 DCTN2 and 2 DCTN3. The 4 DCNT2 (via N-terminus) bind the ACTR1A filament and act as molecular rulers to determine the length. The pointed end is important for binding dynein-dynactin cargo adapters. Consists of 4 subunits: ACTR10, DCNT4, DCTN5 and DCTN6. The barbed end is composed of a CAPZA1:CAPZB heterodimers, which binds ACTR1A/ACTB filament and dynactin and stabilizes dynactin.

It is found in the cytoplasm. It localises to the cytoskeleton. The protein localises to the microtubule organizing center. Its subcellular location is the centrosome. The protein resides in the chromosome. It is found in the centromere. It localises to the kinetochore. The protein localises to the spindle. Its subcellular location is the cleavage furrow. The protein resides in the midbody. In terms of biological role, part of the dynactin complex that activates the molecular motor dynein for ultra-processive transport along microtubules. Together with dynein may be involved in spindle assembly and cytokinesis. The polypeptide is Dynactin subunit 3 (DCTN3) (Bos taurus (Bovine)).